The following is a 118-amino-acid chain: T cell receptor gamma variable 2 (118 aa).

The signal sequence occupies residues 1–17 (MQWALAVLLAFLSPASQ). The 101-residue stretch at 18 to 118 (KSSNLEGRTK…GVYYCATWDG (101 aa)) folds into the Ig-like domain. Cysteine 41 and cysteine 113 are oxidised to a cystine.

In terms of assembly, gamma-delta TR is a heterodimer composed of a gamma and delta chain; disulfide-linked. The gamma-delta TR is associated with the transmembrane signaling CD3 coreceptor proteins following the stoichiometry: a single gamma-delta TR heterodimer associates with one CD3D-CD3E heterodimer, one CD3G-CD3E heterodimer and one CD247 homodimer forming a stable octameric structure. Upon activation, gamma-delta TR complex associates with FCER1G to initiate intracellular signaling.

It localises to the cell membrane. In terms of biological role, v region of the variable domain of T cell receptor (TR) gamma chain that participates in the antigen recognition. Gamma-delta TRs recognize a variety of self and foreign non-peptide antigens frequently expressed at the epithelial boundaries between the host and external environment, including endogenous lipids presented by MH-like protein CD1D and phosphoantigens presented by butyrophilin-like molecule BTN3A1. Upon antigen recognition induces rapid, innate-like immune responses involved in pathogen clearance and tissue repair. Binding of gamma-delta TR complex to antigen triggers phosphorylation of immunoreceptor tyrosine-based activation motifs (ITAMs) in the CD3 chains by the LCK and FYN kinases, allowing the recruitment, phosphorylation, and activation of ZAP70 that facilitates phosphorylation of the scaffolding proteins LCP2 and LAT. This lead to the formation of a supramolecular signalosome that recruits the phospholipase PLCG1, resulting in calcium mobilization and ERK activation, ultimately leading to T cell expansion and differentiation into effector cells. Gamma-delta TRs are produced through somatic rearrangement of a limited repertoire of variable (V), diversity (D), and joining (J) genes. The potential diversity of gamma-delta TRs is conferred by the unique ability to rearrange (D) genes in tandem and to utilize all three reading frames. The combinatorial diversity is considerably increased by the sequence exonuclease trimming and random nucleotide (N) region additions which occur during the V-(D)-J rearrangements. The sequence is that of T cell receptor gamma variable 2 from Homo sapiens (Human).